A 205-amino-acid chain; its full sequence is SREBP regulating gene protein (205 aa).

Over 1-16 the chain is Cytoplasmic; it reads MVPCGAVLWRRLLRKR. Residues 17-35 traverse the membrane as a helical segment; sequence WVLGVVFGLSLVYFLSSTF. The Lumenal segment spans residues 36–205; sequence KQEERTVRDR…GEYPPELLPV (170 aa). A glycan (N-linked (GlcNAc...) asparagine) is linked at Asn67.

It belongs to the SPRING family.

Its subcellular location is the golgi apparatus membrane. Functionally, positively regulates hepatic SREBP signaling pathway by modulating the proper localization of SCAP (SREBP cleavage-activating protein) to the endoplasmic reticulum, thereby controlling the level of functional SCAP. This is SREBP regulating gene protein from Gallus gallus (Chicken).